The primary structure comprises 144 residues: uncharacterized protein (144 aa).

Residues 125–135 are compositionally biased toward polar residues; the sequence is PQQQNNHQLQS. The disordered stretch occupies residues 125–144; that stretch reads PQQQNNHQLQSKPKAASISR.

This is an uncharacterized protein from Rickettsia prowazekii (strain Madrid E).